We begin with the raw amino-acid sequence, 241 residues long: Small ribosomal subunit protein uS2 (241 aa).

The protein belongs to the universal ribosomal protein uS2 family.

The polypeptide is Small ribosomal subunit protein uS2 (Photorhabdus laumondii subsp. laumondii (strain DSM 15139 / CIP 105565 / TT01) (Photorhabdus luminescens subsp. laumondii)).